The sequence spans 295 residues: Thioredoxin-related transmembrane protein 2 (295 aa).

The signal sequence occupies residues 1-48 (MAVLAPLIALVYSVPRLSRWLARPYCLLSALLSIAFLLVRKLPPICNG). The Extracellular portion of the chain corresponds to 49–102 (LPTQREDGNPCDFDWREVEILMFLSAIVMMKNRRSITVEQHVGNIFMFSKVANA). The chain crosses the membrane as a helical span at residues 103–125 (ILFFRLDIRMGLLYLTLCIVFLM). The Thioredoxin domain occupies 114-269 (LLYLTLCIVF…LYQRAKKLSK (156 aa)). Residues 126-295 (TCKPPLYMGP…VPDGENKKDK (170 aa)) are Cytoplasmic-facing. Phosphoserine occurs at positions 211 and 243. Residues 266-295 (KLSKGGDMSEEKPGNPTPTAVPDGENKKDK) are disordered. Residues 292–295 (KKDK) carry the Di-lysine motif motif.

Monomer. Homodimer; disulfide-linked. Occurs in both reduced and oxidized monomeric form. Oxidative conditions increase homodimerization. Interacts with CANX. Interacts with ATP2A2.

It localises to the endoplasmic reticulum membrane. Its subcellular location is the mitochondrion membrane. Its function is as follows. Endoplasmic reticulum and mitochondria-associated protein that probably functions as a regulator of cellular redox state and thereby regulates protein post-translational modification, protein folding and mitochondrial activity. Indirectly regulates neuronal proliferation, migration, and organization in the developing brain. The sequence is that of Thioredoxin-related transmembrane protein 2 (Tmx2) from Rattus norvegicus (Rat).